The following is a 721-amino-acid chain: Catalase-peroxidase (721 aa).

Residues 89-212 (WHSAGTYRTG…LAAVQMGLIY (124 aa)) constitute a cross-link (tryptophyl-tyrosyl-methioninium (Trp-Tyr) (with M-238)). H90 (proton acceptor) is an active-site residue. The segment at residues 212 to 238 (YVNPEGPNGDPDPFAAAVDIRETFARM) is a cross-link (tryptophyl-tyrosyl-methioninium (Tyr-Met) (with W-89)). H253 contributes to the heme b binding site.

The protein belongs to the peroxidase family. Peroxidase/catalase subfamily. As to quaternary structure, homodimer or homotetramer. It depends on heme b as a cofactor. Formation of the three residue Trp-Tyr-Met cross-link is important for the catalase, but not the peroxidase activity of the enzyme.

It catalyses the reaction H2O2 + AH2 = A + 2 H2O. The catalysed reaction is 2 H2O2 = O2 + 2 H2O. In terms of biological role, bifunctional enzyme with both catalase and broad-spectrum peroxidase activity. The sequence is that of Catalase-peroxidase from Shewanella baltica (strain OS195).